Consider the following 328-residue polypeptide: Interleukin-12 subunit beta (328 aa).

A signal peptide spans methionine 1 to alanine 22. The Ig-like C2-type domain maps to aspartate 29–lysine 106. An intrachain disulfide couples cysteine 50 to cysteine 90. N-linked (GlcNAc...) asparagine glycans are attached at residues asparagine 125, asparagine 135, asparagine 222, and asparagine 303. Residues proline 237–serine 328 enclose the Fibronectin type-III domain.

Belongs to the IL-12B family. In terms of assembly, heterodimer with IL12A; disulfide-linked. The heterodimer is known as interleukin IL-12. Heterodimer with IL23A; disulfide-linked. The heterodimer is known as interleukin IL-23. Also secreted as a monomer. Interacts with NBR1; this interaction promotes IL-12 secretion.

The protein localises to the secreted. In terms of biological role, cytokine that can act as a growth factor for activated T and NK cells, enhance the lytic activity of NK/lymphokine-activated killer cells, and stimulate the production of IFN-gamma by resting PBMC. Associates with IL23A to form the IL-23 interleukin, a heterodimeric cytokine which functions in innate and adaptive immunity. IL-23 may constitute with IL-17 an acute response to infection in peripheral tissues. IL-23 binds to a heterodimeric receptor complex composed of IL12RB1 and IL23R, activates the Jak-Stat signaling cascade, stimulates memory rather than naive T-cells and promotes production of pro-inflammatory cytokines. IL-23 induces autoimmune inflammation and thus may be responsible for autoimmune inflammatory diseases and may be important for tumorigenesis. This is Interleukin-12 subunit beta (IL12B) from Papio anubis (Olive baboon).